We begin with the raw amino-acid sequence, 317 residues long: Ribonuclease Z (317 aa).

Zn(2+)-binding residues include His62, His64, Asp66, His67, His139, Asp210, and His268. Catalysis depends on Asp66, which acts as the Proton acceptor.

The protein belongs to the RNase Z family. Homodimer. Zn(2+) serves as cofactor.

It carries out the reaction Endonucleolytic cleavage of RNA, removing extra 3' nucleotides from tRNA precursor, generating 3' termini of tRNAs. A 3'-hydroxy group is left at the tRNA terminus and a 5'-phosphoryl group is left at the trailer molecule.. In terms of biological role, zinc phosphodiesterase, which displays some tRNA 3'-processing endonuclease activity. Probably involved in tRNA maturation, by removing a 3'-trailer from precursor tRNA. This is Ribonuclease Z from Picosynechococcus sp. (strain ATCC 27264 / PCC 7002 / PR-6) (Agmenellum quadruplicatum).